We begin with the raw amino-acid sequence, 149 residues long: Flagellar assembly factor FliW (149 aa).

This sequence belongs to the FliW family. As to quaternary structure, interacts with translational regulator CsrA and flagellin(s).

The protein localises to the cytoplasm. Functionally, acts as an anti-CsrA protein, binds CsrA and prevents it from repressing translation of its target genes, one of which is flagellin. Binds to flagellin and participates in the assembly of the flagellum. The chain is Flagellar assembly factor FliW from Thermotoga maritima (strain ATCC 43589 / DSM 3109 / JCM 10099 / NBRC 100826 / MSB8).